We begin with the raw amino-acid sequence, 82 residues long: MVTIRLSRGGAKKRPFYQIVVADSRSPRDGRFIERVGFFNPIAQGNAERLRINLERVNHWVAQGASLSDRVASLVKEAQKAA.

It belongs to the bacterial ribosomal protein bS16 family.

The protein is Small ribosomal subunit protein bS16 of Haemophilus influenzae (strain 86-028NP).